The following is a 122-amino-acid chain: Large ribosomal subunit protein uL18 (122 aa).

Residues 1–20 (MFKKVSKNANRLSRHQRVRN) form a disordered region.

It belongs to the universal ribosomal protein uL18 family. Part of the 50S ribosomal subunit; part of the 5S rRNA/L5/L18/L25 subcomplex. Contacts the 5S and 23S rRNAs.

This is one of the proteins that bind and probably mediate the attachment of the 5S RNA into the large ribosomal subunit, where it forms part of the central protuberance. In Alkaliphilus oremlandii (strain OhILAs) (Clostridium oremlandii (strain OhILAs)), this protein is Large ribosomal subunit protein uL18.